A 176-amino-acid polypeptide reads, in one-letter code: Vitamin K epoxide reductase complex subunit 1-like protein 1 (176 aa).

Residues 1-13 (MAAPVLLRVSVPR) lie on the Cytoplasmic side of the membrane. A helical membrane pass occupies residues 14–36 (WERVARYAVCAAGILLSIYAYHV). The Lumenal portion of the chain corresponds to 37–87 (EREKERDPEHRALCDLGPWVKCSAALASRWGRGFGLLGSIFGKDGVLNQPN). Cys50 and Cys58 are oxidised to a cystine. Residue Asn87 participates in (S)-warfarin binding. A helical transmembrane segment spans residues 88-102 (SVFGLIFYILQLLLG). The Cytoplasmic segment spans residues 103 to 107 (MTASA). The chain crosses the membrane as a helical span at residues 108 to 135 (VAALVLMTSSIVSVVGSLYLAYILYFVL). The Lumenal portion of the chain corresponds to 136-138 (KEF). Cys139 and Cys142 form a disulfide bridge. The chain crosses the membrane as a helical span at residues 139 to 160 (CIICVTTYVLNFLLLIINYKRL). The phylloquinone site is built by Cys142 and Tyr146. A (S)-warfarin-binding site is contributed by Tyr146. Topologically, residues 161-176 (VYLNEAWKRQLQPKED) are cytoplasmic.

The protein belongs to the VKOR family. As to expression, detected in testis and lung.

It localises to the endoplasmic reticulum membrane. The catalysed reaction is phylloquinone + [protein]-disulfide + H2O = 2,3-epoxyphylloquinone + [protein]-dithiol. It catalyses the reaction phylloquinol + [protein]-disulfide = phylloquinone + [protein]-dithiol. Inhibited by warfarin (coumadin). Warfarin locks VKORC1 in both redox states into the closed conformation. Functionally, involved in vitamin K metabolism. Can reduce inactive vitamin K 2,3-epoxide to active vitamin K, and may contribute to vitamin K-mediated protection against oxidative stress. Plays a role in vitamin K-dependent gamma-carboxylation of Glu residues in target proteins. The protein is Vitamin K epoxide reductase complex subunit 1-like protein 1 (Vkorc1l1) of Mus musculus (Mouse).